The primary structure comprises 1067 residues: Carbamoyl phosphate synthase large chain (1067 aa).

The interval 1 to 401 (MPLNKDIKKV…AFLKGIRSLE (401 aa)) is carboxyphosphate synthetic domain. Residues Arg129, Arg169, Gly175, Gly176, Lys208, Val210, Glu215, Gly241, Ile242, His243, Gln284, and Glu298 each coordinate ATP. The region spanning 133-327 (RDMMNRINQP…IAKVAAKIAL (195 aa)) is the ATP-grasp 1 domain. Mg(2+)-binding residues include Gln284, Glu298, and Asn300. Mn(2+) is bound by residues Gln284, Glu298, and Asn300. Residues 402 to 549 (IGKYSLEHKK…YSTYEQYDEV (148 aa)) form an oligomerization domain region. A carbamoyl phosphate synthetic domain region spans residues 550–932 (VVSDNKKVVV…ALYKGFVGAS (383 aa)). An ATP-grasp 2 domain is found at 674–864 (DDLLERLNIA…IVDIATRIML (191 aa)). ATP is bound by residues Arg710, Lys749, Leu751, Glu755, Gly780, Val781, His782, Ser783, Gln823, and Glu835. Mg(2+) contacts are provided by Gln823, Glu835, and Asn837. Mn(2+)-binding residues include Gln823, Glu835, and Asn837. The region spanning 933 to 1067 (MYTGDKGKTI…NRELEVFNLI (135 aa)) is the MGS-like domain. Residues 933–1067 (MYTGDKGKTI…NRELEVFNLI (135 aa)) form an allosteric domain region.

It belongs to the CarB family. Composed of two chains; the small (or glutamine) chain promotes the hydrolysis of glutamine to ammonia, which is used by the large (or ammonia) chain to synthesize carbamoyl phosphate. Tetramer of heterodimers (alpha,beta)4. The cofactor is Mg(2+). Requires Mn(2+) as cofactor.

It carries out the reaction hydrogencarbonate + L-glutamine + 2 ATP + H2O = carbamoyl phosphate + L-glutamate + 2 ADP + phosphate + 2 H(+). The enzyme catalyses hydrogencarbonate + NH4(+) + 2 ATP = carbamoyl phosphate + 2 ADP + phosphate + 2 H(+). The protein operates within amino-acid biosynthesis; L-arginine biosynthesis; carbamoyl phosphate from bicarbonate: step 1/1. Its pathway is pyrimidine metabolism; UMP biosynthesis via de novo pathway; (S)-dihydroorotate from bicarbonate: step 1/3. In terms of biological role, large subunit of the glutamine-dependent carbamoyl phosphate synthetase (CPSase). CPSase catalyzes the formation of carbamoyl phosphate from the ammonia moiety of glutamine, carbonate, and phosphate donated by ATP, constituting the first step of 2 biosynthetic pathways, one leading to arginine and/or urea and the other to pyrimidine nucleotides. The large subunit (synthetase) binds the substrates ammonia (free or transferred from glutamine from the small subunit), hydrogencarbonate and ATP and carries out an ATP-coupled ligase reaction, activating hydrogencarbonate by forming carboxy phosphate which reacts with ammonia to form carbamoyl phosphate. This Clostridium perfringens (strain SM101 / Type A) protein is Carbamoyl phosphate synthase large chain.